Reading from the N-terminus, the 83-residue chain is Exodeoxyribonuclease 7 small subunit (83 aa).

Belongs to the XseB family. As to quaternary structure, heterooligomer composed of large and small subunits.

The protein localises to the cytoplasm. The enzyme catalyses Exonucleolytic cleavage in either 5'- to 3'- or 3'- to 5'-direction to yield nucleoside 5'-phosphates.. Bidirectionally degrades single-stranded DNA into large acid-insoluble oligonucleotides, which are then degraded further into small acid-soluble oligonucleotides. This is Exodeoxyribonuclease 7 small subunit from Brucella melitensis biotype 1 (strain ATCC 23456 / CCUG 17765 / NCTC 10094 / 16M).